The primary structure comprises 255 residues: uncharacterized protein (255 aa).

A signal peptide spans 1–23 (MKRLNKLVLYISFLILVISFTAG). The N-palmitoyl cysteine moiety is linked to residue Cys24. Cys24 carries the S-diacylglycerol cysteine lipid modification.

It belongs to the staphylococcal tandem lipoprotein family.

Its subcellular location is the cell membrane. This is an uncharacterized protein from Staphylococcus aureus (strain NCTC 8325 / PS 47).